A 549-amino-acid polypeptide reads, in one-letter code: Carboxylesterase 1C (549 aa).

The first 18 residues, 1–18 (MWLCALVWASLAVCPIWG), serve as a signal peptide directing secretion. Asn-79 is a glycosylation site (N-linked (GlcNAc...) asparagine). Cys-87 and Cys-116 are disulfide-bonded. Residue Ser-221 is the Acyl-ester intermediate of the active site. Cys-273 and Cys-284 form a disulfide bridge. N-linked (GlcNAc...) asparagine glycans are attached at residues Asn-274, Asn-275, and Asn-302. The active-site Charge relay system is the Glu-340. A glycan (N-linked (GlcNAc...) asparagine) is linked at Asn-375. The active-site Charge relay system is His-453. Phosphoserine is present on Ser-471. Residue Asn-476 is glycosylated (N-linked (GlcNAc...) asparagine). The Prevents secretion from ER motif lies at 546-549 (TEHT).

The protein belongs to the type-B carboxylesterase/lipase family.

It is found in the endoplasmic reticulum lumen. The catalysed reaction is a carboxylic ester + H2O = an alcohol + a carboxylate + H(+). Its function is as follows. Involved in the detoxification of xenobiotics and in the activation of ester and amide prodrugs. Involved in the extracellular metabolism of lung surfactant. The protein is Carboxylesterase 1C (Ces1c) of Rattus norvegicus (Rat).